Consider the following 441-residue polypeptide: Ribulose bisphosphate carboxylase large chain (441 aa).

Residue K5 is modified to N6,N6,N6-trimethyllysine. Residues N114 and T164 each contribute to the substrate site. Residue K166 is the Proton acceptor of the active site. Residue K168 coordinates substrate. K192, D194, and E195 together coordinate Mg(2+). K192 carries the N6-carboxylysine modification. H285 serves as the catalytic Proton acceptor. R286, H318, and S370 together coordinate substrate.

Belongs to the RuBisCO large chain family. Type I subfamily. Heterohexadecamer of 8 large chains and 8 small chains; disulfide-linked. The disulfide link is formed within the large subunit homodimers. It depends on Mg(2+) as a cofactor. The disulfide bond which can form in the large chain dimeric partners within the hexadecamer appears to be associated with oxidative stress and protein turnover.

It is found in the plastid. The protein resides in the chloroplast. The enzyme catalyses 2 (2R)-3-phosphoglycerate + 2 H(+) = D-ribulose 1,5-bisphosphate + CO2 + H2O. It carries out the reaction D-ribulose 1,5-bisphosphate + O2 = 2-phosphoglycolate + (2R)-3-phosphoglycerate + 2 H(+). In terms of biological role, ruBisCO catalyzes two reactions: the carboxylation of D-ribulose 1,5-bisphosphate, the primary event in carbon dioxide fixation, as well as the oxidative fragmentation of the pentose substrate in the photorespiration process. Both reactions occur simultaneously and in competition at the same active site. This Drosera petiolaris (Woolly sundew) protein is Ribulose bisphosphate carboxylase large chain.